The following is a 436-amino-acid chain: Coiled-coil domain-containing protein 71 (436 aa).

Residues A95 to V119 form a disordered region. The span at T105–L116 shows a compositional bias: polar residues. S129 is modified (phosphoserine). Disordered regions lie at residues L210 to R258 and A314 to R405. The stretch at K264 to K334 forms a coiled coil. Basic residues predominate over residues K329–K340. Residues Q344–V359 show a composition bias toward polar residues. A compositionally biased stretch (basic residues) spans P373–A386.

This is Coiled-coil domain-containing protein 71 (Ccdc71) from Rattus norvegicus (Rat).